We begin with the raw amino-acid sequence, 381 residues long: Bifunctional polyhydroxybutyrate synthase / ABC transporter periplasmic binding protein (381 aa).

The signal sequence occupies residues 1-22 (MSKTFARSSLCALSMTIMTAHA).

Belongs to the bacterial solute-binding protein PotD/PotF family.

The protein resides in the periplasm. It catalyses the reaction (3R)-3-hydroxybutanoyl-CoA + [(3R)-hydroxybutanoate](n) = [(3R)-hydroxybutanoate](n+1) + CoA. Catalyzes the formation of short polymers of R-3-hydroxybutyrate (cPHB). Involved in natural transformation. Probably part of the ABC transporter complex YdcSTUV. During natural transformation, may bind dsDNA and convey it to the inner membrane channel formed by YdcV. This Escherichia coli (strain K12) protein is Bifunctional polyhydroxybutyrate synthase / ABC transporter periplasmic binding protein (ydcS).